The following is an 86-amino-acid chain: Small ribosomal subunit protein bS18 (86 aa).

Belongs to the bacterial ribosomal protein bS18 family. As to quaternary structure, part of the 30S ribosomal subunit. Forms a tight heterodimer with protein bS6.

Its function is as follows. Binds as a heterodimer with protein bS6 to the central domain of the 16S rRNA, where it helps stabilize the platform of the 30S subunit. The protein is Small ribosomal subunit protein bS18 of Protochlamydia amoebophila (strain UWE25).